The primary structure comprises 207 residues: Small ribosomal subunit protein uS4 (207 aa).

Positions 31–55 are disordered; it reads KCKLDSKPGQHGRTSGARTSDYGTQ. The segment covering 42-53 has biased composition (polar residues); the sequence is GRTSGARTSDYG. Residues 97 to 160 form the S4 RNA-binding domain; the sequence is SRLDNVVYRM…KKQARIVEAL (64 aa).

The protein belongs to the universal ribosomal protein uS4 family. Part of the 30S ribosomal subunit. Contacts protein S5. The interaction surface between S4 and S5 is involved in control of translational fidelity.

Functionally, one of the primary rRNA binding proteins, it binds directly to 16S rRNA where it nucleates assembly of the body of the 30S subunit. Its function is as follows. With S5 and S12 plays an important role in translational accuracy. This is Small ribosomal subunit protein uS4 from Burkholderia ambifaria (strain ATCC BAA-244 / DSM 16087 / CCUG 44356 / LMG 19182 / AMMD) (Burkholderia cepacia (strain AMMD)).